The chain runs to 415 residues: Cyclin-A2 (415 aa).

This sequence belongs to the cyclin family. Cyclin AB subfamily. As to quaternary structure, interacts with the CDK1 and CDK2 protein kinases to form serine/threonine kinase holoenzyme complexes. Ubiquitous.

It is found in the nucleus. Its subcellular location is the cytoplasm. Cyclin which controls both the G1/S and the G2/M transition phases of the cell cycle. Functions through the formation of specific serine/threonine kinase holoenzyme complexes with the cyclin-dependent protein kinases CDK1 and CDK2. The cyclin subunit confers the substrate specificity of these complexes and differentially interacts with and activates CDK1 and CDK2 throughout the cell cycle. This is Cyclin-A2 (ccna2) from Xenopus laevis (African clawed frog).